The following is an 879-amino-acid chain: Phosphoenolpyruvate carboxylase (879 aa).

Active-site residues include His-141 and Lys-546.

The protein belongs to the PEPCase type 1 family. Requires Mg(2+) as cofactor.

The enzyme catalyses oxaloacetate + phosphate = phosphoenolpyruvate + hydrogencarbonate. Functionally, forms oxaloacetate, a four-carbon dicarboxylic acid source for the tricarboxylic acid cycle. The sequence is that of Phosphoenolpyruvate carboxylase from Stutzerimonas stutzeri (strain A1501) (Pseudomonas stutzeri).